The chain runs to 105 residues: Large ribosomal subunit protein eL42 (105 aa).

The interval lysine 23–glutamine 52 is disordered. Over residues lysine 29–glutamine 46 the composition is skewed to basic and acidic residues.

It belongs to the eukaryotic ribosomal protein eL42 family.

The chain is Large ribosomal subunit protein eL42 (rpl-44) from Brugia malayi (Filarial nematode worm).